A 161-amino-acid polypeptide reads, in one-letter code: MAGKRRKKGRSHSTRPATPTVPKWIQYDPEEIEEIIVDLARKGYGPSMIGIILRDQFGIPLVKPILGKSITEVLEERGIKMVVPEDLFRLIEKAVNLRRHLEEHPKDTHAKKGLLDLESKIRRLAEYYKRVGKLPRDWKYDPQQAKLLVAGGLYREEKPAS.

The span at 1–13 shows a compositional bias: basic residues; sequence MAGKRRKKGRSHS. Residues 1–22 form a disordered region; it reads MAGKRRKKGRSHSTRPATPTVP.

The protein belongs to the universal ribosomal protein uS15 family. Part of the 30S ribosomal subunit.

The sequence is that of Small ribosomal subunit protein uS15 from Hyperthermus butylicus (strain DSM 5456 / JCM 9403 / PLM1-5).